Here is a 338-residue protein sequence, read N- to C-terminus: 1-aminocyclopropane-1-carboxylate deaminase (338 aa).

An N6-(pyridoxal phosphate)lysine modification is found at lysine 51. The active-site Nucleophile is the serine 78.

Belongs to the ACC deaminase/D-cysteine desulfhydrase family. As to quaternary structure, homotrimer. It depends on pyridoxal 5'-phosphate as a cofactor.

It catalyses the reaction 1-aminocyclopropane-1-carboxylate + H2O = 2-oxobutanoate + NH4(+). Catalyzes a cyclopropane ring-opening reaction, the irreversible conversion of 1-aminocyclopropane-1-carboxylate (ACC) to ammonia and alpha-ketobutyrate. Allows growth on ACC as a nitrogen source. This chain is 1-aminocyclopropane-1-carboxylate deaminase, found in Variovorax paradoxus (strain S110).